The sequence spans 326 residues: Olfactory receptor 8A1 (326 aa).

The Extracellular segment spans residues 1–45 (MGFLSPMHPCRPPTQRRMAAGNHSTVTEFILKGLTKRADLQLPLF). An N-linked (GlcNAc...) asparagine glycan is attached at Asn-22. Residues 46 to 66 (LLFLGIYLVTIVGNLGMITLI) form a helical membrane-spanning segment. Topologically, residues 67-77 (CLNSQLHTPMY) are cytoplasmic. The helical transmembrane segment at 78-100 (YFLSNLSLMDLCYSSVITPKMLV) threads the bilayer. At 101 to 116 (NFVSEKNIISYAGCMS) the chain is on the extracellular side. Cys-114 and Cys-195 form a disulfide bridge. Residues 117 to 137 (QLYFFLVFVIAECYMLTVMAY) form a helical membrane-spanning segment. Topologically, residues 138-150 (DRYVAICHPLLYN) are cytoplasmic. A helical transmembrane segment spans residues 151–171 (IIMSHHTCLLLVAVVYAIGLI). Residues 172 to 222 (GSTIETGLMLKLPYCEHLISHYFCDILPLMKLSCSSTYDVEMTVFFSAGFN) lie on the Extracellular side of the membrane. A helical membrane pass occupies residues 223-243 (IIVTSLTVLVSYTFILSSILG). Over 244-260 (ISTTEGRSKAFSTCSSH) the chain is Cytoplasmic. The helical transmembrane segment at 261 to 281 (LAAVGMFYGSTAFMYLKPSTI) threads the bilayer. Over 282 to 287 (SSLTQE) the chain is Extracellular. The helical transmembrane segment at 288–308 (NVASVFYTTVIPMLNPLIYSL) threads the bilayer. At 309-326 (RNKEVKAAVQKTLRGKLF) the chain is on the cytoplasmic side.

It belongs to the G-protein coupled receptor 1 family.

The protein resides in the cell membrane. Functionally, odorant receptor. This Homo sapiens (Human) protein is Olfactory receptor 8A1 (OR8A1).